We begin with the raw amino-acid sequence, 116 residues long: Protein Rev (116 aa).

Ser-5 carries the post-translational modification Phosphoserine; by host CK2. The tract at residues 18-26 (IIRLLYQSN) is homomultimerization. Residues 27–49 (PYPEPAGTRQAQRNRRRRWRARQ) are disordered. The Nuclear localization signal and RNA-binding (RRE) signature appears at 34 to 50 (TRQAQRNRRRRWRARQR). Over residues 38 to 49 (QRNRRRRWRARQ) the composition is skewed to basic residues. Residues 73 to 84 (LQLPPLERLTLD) carry the Nuclear export signal and binding to XPO1 motif. A disordered region spans residues 86–116 (SEDCGTSGEKGVGSPQTSGESPAVLGTGAKE). Phosphoserine; by host occurs at positions 92 and 99.

Belongs to the HIV-1 REV protein family. As to quaternary structure, homomultimer; when bound to the RRE. Multimeric assembly is essential for activity and may involve XPO1. Binds to human KPNB1, XPO1, TNPO1, RANBP5 and IPO7. Interacts with the viral Integrase. Interacts with human KHDRBS1. Interacts with human NAP1; this interaction decreases Rev multimerization and stimulates its activity. Interacts with human DEAD-box helicases DDX3 and DDX24; these interactions may serve for viral RNA export to the cytoplasm and packaging, respectively. Interacts with human PSIP1; this interaction may inhibit HIV-1 DNA integration by promoting dissociation of the Integrase-LEDGF/p75 complex. Asymmetrically arginine dimethylated at one site by host PRMT6. Methylation impairs the RNA-binding activity and export of viral RNA from the nucleus to the cytoplasm. Post-translationally, phosphorylated by protein kinase CK2. Presence of, and maybe binding to the N-terminus of the regulatory beta subunit of CK2 is necessary for CK2-mediated Rev's phosphorylation.

The protein localises to the host nucleus. The protein resides in the host nucleolus. Its subcellular location is the host cytoplasm. Functionally, escorts unspliced or incompletely spliced viral pre-mRNAs (late transcripts) out of the nucleus of infected cells. These pre-mRNAs carry a recognition sequence called Rev responsive element (RRE) located in the env gene, that is not present in fully spliced viral mRNAs (early transcripts). This function is essential since most viral proteins are translated from unspliced or partially spliced pre-mRNAs which cannot exit the nucleus by the pathway used by fully processed cellular mRNAs. Rev itself is translated from a fully spliced mRNA that readily exits the nucleus. Rev's nuclear localization signal (NLS) binds directly to KPNB1/Importin beta-1 without previous binding to KPNA1/Importin alpha-1. KPNB1 binds to the GDP bound form of RAN (Ran-GDP) and targets Rev to the nucleus. In the nucleus, the conversion from Ran-GDP to Ran-GTP dissociates Rev from KPNB1 and allows Rev's binding to the RRE in viral pre-mRNAs. Rev multimerization on the RRE via cooperative assembly exposes its nuclear export signal (NES) to the surface. Rev can then form a complex with XPO1/CRM1 and Ran-GTP, leading to nuclear export of the complex. Conversion from Ran-GTP to Ran-GDP mediates dissociation of the Rev/RRE/XPO1/RAN complex, so that Rev can return to the nucleus for a subsequent round of export. Beside KPNB1, also seems to interact with TNPO1/Transportin-1, RANBP5/IPO5 and IPO7/RANBP7 for nuclear import. The nucleoporin-like HRB/RIP is an essential cofactor that probably indirectly interacts with Rev to release HIV RNAs from the perinuclear region to the cytoplasm. This is Protein Rev from Human immunodeficiency virus type 1 group M subtype H (isolate VI991) (HIV-1).